A 511-amino-acid chain; its full sequence is Lysine--tRNA ligase (511 aa).

Glu-421 and Glu-428 together coordinate Mg(2+).

This sequence belongs to the class-II aminoacyl-tRNA synthetase family. In terms of assembly, homodimer. Mg(2+) is required as a cofactor.

It is found in the cytoplasm. It carries out the reaction tRNA(Lys) + L-lysine + ATP = L-lysyl-tRNA(Lys) + AMP + diphosphate. This is Lysine--tRNA ligase from Aeromonas hydrophila subsp. hydrophila (strain ATCC 7966 / DSM 30187 / BCRC 13018 / CCUG 14551 / JCM 1027 / KCTC 2358 / NCIMB 9240 / NCTC 8049).